Here is a 1241-residue protein sequence, read N- to C-terminus: ATP-dependent helicase/nuclease subunit A (1241 aa).

Residues 12–485 enclose the UvrD-like helicase ATP-binding domain; sequence SQWTDDQWKA…IDLAKNFRSR (474 aa). An ATP-binding site is contributed by 33–40; the sequence is AAAGSGKT. Positions 505 to 805 constitute a UvrD-like helicase C-terminal domain; that stretch reads GEIDYDADAE…RIMTIHKSKG (301 aa).

Belongs to the helicase family. AddA subfamily. Heterodimer of AddA and AddB/RexB. The cofactor is Mg(2+).

The enzyme catalyses Couples ATP hydrolysis with the unwinding of duplex DNA by translocating in the 3'-5' direction.. It carries out the reaction ATP + H2O = ADP + phosphate + H(+). Functionally, the heterodimer acts as both an ATP-dependent DNA helicase and an ATP-dependent, dual-direction single-stranded exonuclease. Recognizes the chi site generating a DNA molecule suitable for the initiation of homologous recombination. The AddA nuclease domain is required for chi fragment generation; this subunit has the helicase and 3' -&gt; 5' nuclease activities. The protein is ATP-dependent helicase/nuclease subunit A of Bacillus cereus (strain G9842).